We begin with the raw amino-acid sequence, 268 residues long: 4-diphosphocytidyl-2-C-methyl-D-erythritol kinase (268 aa).

The active site involves lysine 10. 101–111 provides a ligand contact to ATP; that stretch reads PTQAGLGGGST. Residue aspartate 143 is part of the active site.

It belongs to the GHMP kinase family. IspE subfamily.

The enzyme catalyses 4-CDP-2-C-methyl-D-erythritol + ATP = 4-CDP-2-C-methyl-D-erythritol 2-phosphate + ADP + H(+). It participates in isoprenoid biosynthesis; isopentenyl diphosphate biosynthesis via DXP pathway; isopentenyl diphosphate from 1-deoxy-D-xylulose 5-phosphate: step 3/6. Catalyzes the phosphorylation of the position 2 hydroxy group of 4-diphosphocytidyl-2C-methyl-D-erythritol. The sequence is that of 4-diphosphocytidyl-2-C-methyl-D-erythritol kinase from Helicobacter acinonychis (strain Sheeba).